We begin with the raw amino-acid sequence, 69 residues long: Putative membrane protein insertion efficiency factor (69 aa).

This sequence belongs to the UPF0161 family.

Its subcellular location is the cell membrane. In terms of biological role, could be involved in insertion of integral membrane proteins into the membrane. The protein is Putative membrane protein insertion efficiency factor of Clostridium kluyveri (strain NBRC 12016).